Consider the following 173-residue polypeptide: Mediator of RNA polymerase II transcription subunit 19 (173 aa).

The tract at residues 139-173 (LMRGDDMSENDEFGARRSKRKKKAQNGTDSKRQHI) is disordered.

It belongs to the Mediator complex subunit 19 family. In terms of assembly, component of the Mediator complex.

It is found in the nucleus. Component of the Mediator complex, a coactivator involved in the regulated transcription of nearly all RNA polymerase II-dependent genes. Mediator functions as a bridge to convey information from gene-specific regulatory proteins to the basal RNA polymerase II transcription machinery. Mediator is recruited to promoters by direct interactions with regulatory proteins and serves as a scaffold for the assembly of a functional preinitiation complex with RNA polymerase II and the general transcription factors. This chain is Mediator of RNA polymerase II transcription subunit 19 (ROX3), found in Scheffersomyces stipitis (strain ATCC 58785 / CBS 6054 / NBRC 10063 / NRRL Y-11545) (Yeast).